Here is a 378-residue protein sequence, read N- to C-terminus: Carbamoyl phosphate synthase small chain (378 aa).

The CPSase stretch occupies residues 1 to 189 (MTKPAILALA…DSHPTIDAAD (189 aa)). L-glutamine-binding residues include Ser47, Gly241, and Gly243. Residues 193-378 (HVVAFDYGVK…RFTDAMAKRR (186 aa)) enclose the Glutamine amidotransferase type-1 domain. The active-site Nucleophile is the Cys269. Leu270, Gln273, Asn311, Gly313, and Phe314 together coordinate L-glutamine. Residues His353 and Glu355 contribute to the active site.

The protein belongs to the CarA family. Composed of two chains; the small (or glutamine) chain promotes the hydrolysis of glutamine to ammonia, which is used by the large (or ammonia) chain to synthesize carbamoyl phosphate. Tetramer of heterodimers (alpha,beta)4.

The catalysed reaction is hydrogencarbonate + L-glutamine + 2 ATP + H2O = carbamoyl phosphate + L-glutamate + 2 ADP + phosphate + 2 H(+). It carries out the reaction L-glutamine + H2O = L-glutamate + NH4(+). It participates in amino-acid biosynthesis; L-arginine biosynthesis; carbamoyl phosphate from bicarbonate: step 1/1. Its pathway is pyrimidine metabolism; UMP biosynthesis via de novo pathway; (S)-dihydroorotate from bicarbonate: step 1/3. In terms of biological role, small subunit of the glutamine-dependent carbamoyl phosphate synthetase (CPSase). CPSase catalyzes the formation of carbamoyl phosphate from the ammonia moiety of glutamine, carbonate, and phosphate donated by ATP, constituting the first step of 2 biosynthetic pathways, one leading to arginine and/or urea and the other to pyrimidine nucleotides. The small subunit (glutamine amidotransferase) binds and cleaves glutamine to supply the large subunit with the substrate ammonia. In Pseudomonas putida (strain ATCC 47054 / DSM 6125 / CFBP 8728 / NCIMB 11950 / KT2440), this protein is Carbamoyl phosphate synthase small chain.